A 518-amino-acid polypeptide reads, in one-letter code: Protein translocase subunit SecD (518 aa).

6 helical membrane passes run 9–29 (IFLS…NFMQ), 361–381 (LIGF…LGLF), 384–404 (IALS…QATL), 406–426 (LPGI…NVLI), 452–474 (FATI…IFGV), and 486–506 (IGII…IDIW).

The protein belongs to the SecD/SecF family. SecD subfamily. Forms a complex with SecF. Part of the essential Sec protein translocation apparatus which comprises SecA, SecYEG and auxiliary proteins SecDF-YajC and YidC.

It is found in the cell inner membrane. Part of the Sec protein translocase complex. Interacts with the SecYEG preprotein conducting channel. SecDF uses the proton motive force (PMF) to complete protein translocation after the ATP-dependent function of SecA. The sequence is that of Protein translocase subunit SecD from Rickettsia conorii (strain ATCC VR-613 / Malish 7).